The primary structure comprises 425 residues: MEVKELERDKNRVVLEYVFGAEEIAQAEDKAVRYLNQRVEIPGFRKGRIPKNVLKMKLGEEFQEYTLDFLMDLIPDTLKDRKLILSPIVTERELKDVTARVVVEVHEEPEVRIGDISKIEVEKVDEEKVLEKYVERRIEDLRESHALLEPKEGPAEAGDLVRVNMEVYNEEGKKLTSREYEYVISEDEDRPFVKDLVGKKKGDVVEIEREYEGKKYTYKLEVEEVYKRTLPEIGDELAKSVNNEFETLEQLKESLKKEGKEIYDVEMKESMREQLLEKLPEIVEIEISDRTLEILVNEAINRLKREGRYEQIVSSYESEEKFREELKERILDDIKRDRVIEVLAQEKGISVNDEELEKEAEELAPFWGISPDRAKSLVKARQDLREELRWAILKRKVLDLLLQEVKVKVVEPKGEGDDSEGKEDN.

Residues 158-231 (GDLVRVNMEV…VEEVYKRTLP (74 aa)) enclose the PPIase FKBP-type domain.

It belongs to the FKBP-type PPIase family. Tig subfamily.

Its subcellular location is the cytoplasm. The catalysed reaction is [protein]-peptidylproline (omega=180) = [protein]-peptidylproline (omega=0). Functionally, involved in protein export. Acts as a chaperone by maintaining the newly synthesized protein in an open conformation. Functions as a peptidyl-prolyl cis-trans isomerase. The protein is Trigger factor (tig) of Thermotoga maritima (strain ATCC 43589 / DSM 3109 / JCM 10099 / NBRC 100826 / MSB8).